The chain runs to 336 residues: Ferredoxin--NADP reductase 1 (336 aa).

7 residues coordinate FAD: E37, K45, F50, V90, L125, D287, and T328.

This sequence belongs to the ferredoxin--NADP reductase type 2 family. As to quaternary structure, homodimer. Requires FAD as cofactor.

The catalysed reaction is 2 reduced [2Fe-2S]-[ferredoxin] + NADP(+) + H(+) = 2 oxidized [2Fe-2S]-[ferredoxin] + NADPH. This chain is Ferredoxin--NADP reductase 1, found in Bacillus velezensis (strain DSM 23117 / BGSC 10A6 / LMG 26770 / FZB42) (Bacillus amyloliquefaciens subsp. plantarum).